A 44-amino-acid polypeptide reads, in one-letter code: Photosystem I reaction center subunit IX (44 aa).

A helical transmembrane segment spans residues 7-27; the sequence is YLSVAPVLSTLWFASLAGLLI.

This sequence belongs to the PsaJ family.

It is found in the plastid. The protein resides in the chloroplast thylakoid membrane. Its function is as follows. May help in the organization of the PsaE and PsaF subunits. In Barbarea verna (Land cress), this protein is Photosystem I reaction center subunit IX.